We begin with the raw amino-acid sequence, 154 residues long: Lipoprotein signal peptidase (154 aa).

Transmembrane regions (helical) follow at residues 7 to 27 (VLYL…KNYI), 58 to 78 (IFSG…AVVV), and 88 to 108 (NWLF…NFID). Catalysis depends on residues aspartate 117 and aspartate 133. Residues 128 to 148 (IFNIADSAITVGIVLVFIYLI) traverse the membrane as a helical segment.

The protein belongs to the peptidase A8 family.

It localises to the cell membrane. It carries out the reaction Release of signal peptides from bacterial membrane prolipoproteins. Hydrolyzes -Xaa-Yaa-Zaa-|-(S,diacylglyceryl)Cys-, in which Xaa is hydrophobic (preferably Leu), and Yaa (Ala or Ser) and Zaa (Gly or Ala) have small, neutral side chains.. It functions in the pathway protein modification; lipoprotein biosynthesis (signal peptide cleavage). This protein specifically catalyzes the removal of signal peptides from prolipoproteins. This chain is Lipoprotein signal peptidase, found in Lactobacillus gasseri (strain ATCC 33323 / DSM 20243 / BCRC 14619 / CIP 102991 / JCM 1131 / KCTC 3163 / NCIMB 11718 / NCTC 13722 / AM63).